A 167-amino-acid chain; its full sequence is Large ribosomal subunit protein uL10 (167 aa).

This sequence belongs to the universal ribosomal protein uL10 family. In terms of assembly, part of the ribosomal stalk of the 50S ribosomal subunit. The N-terminus interacts with L11 and the large rRNA to form the base of the stalk. The C-terminus forms an elongated spine to which L12 dimers bind in a sequential fashion forming a multimeric L10(L12)X complex.

In terms of biological role, forms part of the ribosomal stalk, playing a central role in the interaction of the ribosome with GTP-bound translation factors. This is Large ribosomal subunit protein uL10 from Alkaliphilus oremlandii (strain OhILAs) (Clostridium oremlandii (strain OhILAs)).